A 136-amino-acid chain; its full sequence is Large ribosomal subunit protein bL17 (136 aa).

Belongs to the bacterial ribosomal protein bL17 family. As to quaternary structure, part of the 50S ribosomal subunit. Contacts protein L32.

This Rickettsia canadensis (strain McKiel) protein is Large ribosomal subunit protein bL17.